The chain runs to 289 residues: 4-diphosphocytidyl-2-C-methyl-D-erythritol kinase (289 aa).

The active site involves lysine 10. 99 to 109 (PMGGGLGGGSS) contacts ATP. Residue aspartate 141 is part of the active site.

This sequence belongs to the GHMP kinase family. IspE subfamily. Homodimer.

It catalyses the reaction 4-CDP-2-C-methyl-D-erythritol + ATP = 4-CDP-2-C-methyl-D-erythritol 2-phosphate + ADP + H(+). It participates in isoprenoid biosynthesis; isopentenyl diphosphate biosynthesis via DXP pathway; isopentenyl diphosphate from 1-deoxy-D-xylulose 5-phosphate: step 3/6. Catalyzes the phosphorylation of the position 2 hydroxy group of 4-diphosphocytidyl-2C-methyl-D-erythritol. This chain is 4-diphosphocytidyl-2-C-methyl-D-erythritol kinase, found in Enterobacter sp. (strain 638).